The following is a 927-amino-acid chain: Isoleucine--tRNA ligase (927 aa).

A 'HIGH' region motif is present at residues 57–67 (PFANGNIHMGH). Position 553 (Glu-553) interacts with L-isoleucyl-5'-AMP. The short motif at 594 to 598 (KMSKS) is the 'KMSKS' region element. Residue Lys-597 participates in ATP binding. Zn(2+)-binding residues include Cys-886, Cys-889, Cys-906, and Cys-909.

Belongs to the class-I aminoacyl-tRNA synthetase family. IleS type 1 subfamily. As to quaternary structure, monomer. It depends on Zn(2+) as a cofactor.

The protein localises to the cytoplasm. It carries out the reaction tRNA(Ile) + L-isoleucine + ATP = L-isoleucyl-tRNA(Ile) + AMP + diphosphate. Functionally, catalyzes the attachment of isoleucine to tRNA(Ile). As IleRS can inadvertently accommodate and process structurally similar amino acids such as valine, to avoid such errors it has two additional distinct tRNA(Ile)-dependent editing activities. One activity is designated as 'pretransfer' editing and involves the hydrolysis of activated Val-AMP. The other activity is designated 'posttransfer' editing and involves deacylation of mischarged Val-tRNA(Ile). The sequence is that of Isoleucine--tRNA ligase from Lactobacillus helveticus (strain DPC 4571).